Here is a 302-residue protein sequence, read N- to C-terminus: MVTPKQIDFSSCVGADNSNGTLSHRRSPRNIPSSKRAASVAEEETMKKKMKMKKKKKKLDPPLIVRIWNEEDELSILKGLVDYRAKTGFNPKIDWDAFCSFLGSSIVERFSKDQVLSKIRKLKRRFHVHSEKINQGNDPKFTRSSDSEAFGFSSMIWGQGDDDGMDKEHEVNGNGAAENRTNESGEEMLKEHEEEVANTELLNENGAAKTTENGTSSGKERHDEDNDDDDELCAVQDAFEAVMSQGLSGYQKKLQLEKLMNLGNGKRRELSDEWKALCVEETRFNIKKLRFSAKLAEAANDS.

Disordered regions lie at residues 1 to 55 (MVTP…MKKK) and 158 to 229 (GQGD…NDDD). Residue Ser27 is modified to Phosphoserine. Residues 180–195 (RTNESGEEMLKEHEEE) show a composition bias toward basic and acidic residues. Residues 208–217 (AKTTENGTSS) are compositionally biased toward polar residues. A non-canonical leucine-zipper region spans residues 270–291 (LSDEWKALCVEETRFNIKKLRF).

The protein belongs to the GeBP family. In terms of assembly, homo- and heterodimers. Interacts with GPL1, GPL2 and GPL3. Interacts with KIN10, KIN11 and FLZ4. Interacts with KIN10 and KIN11 via its N-terminal part. Interacts with GPL1 and GPL3 via its C-terminal part. Expressed in the apical meristem and young leaf primordia. Not detected in emerging or mature leaves. Detected in the vascular tissues of cotyledons and leaves, in hydathodes and at the base of flowers and siliques, but not in roots.

Its subcellular location is the nucleus. The protein resides in the nucleolus. DNA-binding protein, which specifically recognizes the GL1 enhancer sequence. May be involved in leaf initiation. May play redundant roles with GPL1 and GPL2 in cytokinin responses by regulating the transcript levels of type-A ARR response genes. Involved in stress responses. Plays a repressive role in cell expansion by counteracting the positive role of CPR5 in this process, but does not regulate cell proliferation or endoreduplication. May play a role in plant defense. This is GLABROUS1 enhancer-binding protein from Arabidopsis thaliana (Mouse-ear cress).